Reading from the N-terminus, the 137-residue chain is Small ribosomal subunit protein uS12 (137 aa).

Residues 1–43 (MPTINQLVRKGRVSKTKKSDSPALNKGYNSFKKRMTDQNAPQK) form a disordered region.

The protein belongs to the universal ribosomal protein uS12 family. In terms of assembly, part of the 30S ribosomal subunit. Contacts proteins S8 and S17. May interact with IF1 in the 30S initiation complex.

Its function is as follows. With S4 and S5 plays an important role in translational accuracy. Functionally, interacts with and stabilizes bases of the 16S rRNA that are involved in tRNA selection in the A site and with the mRNA backbone. Located at the interface of the 30S and 50S subunits, it traverses the body of the 30S subunit contacting proteins on the other side and probably holding the rRNA structure together. The combined cluster of proteins S8, S12 and S17 appears to hold together the shoulder and platform of the 30S subunit. This chain is Small ribosomal subunit protein uS12, found in Oceanobacillus iheyensis (strain DSM 14371 / CIP 107618 / JCM 11309 / KCTC 3954 / HTE831).